A 265-amino-acid chain; its full sequence is Eukaryotic translation initiation factor 3 subunit J (265 aa).

The segment covering 24-34 has biased composition (acidic residues); the sequence is AGDEPILDSWD. The disordered stretch occupies residues 24 to 74; that stretch reads AGDEPILDSWDEEPKAKKEAAKPKPKPKAGGKKNAKGEEKKEQVLAIDELD. Residues 35–45 show a composition bias toward basic and acidic residues; the sequence is EEPKAKKEAAK. The span at 46-57 shows a compositional bias: basic residues; the sequence is PKPKPKAGGKKN. 2 coiled-coil regions span residues 78–106 and 190–220; these read RKEL…MAEE and IENI…ARVK.

The protein belongs to the eIF-3 subunit J family. As to quaternary structure, component of the eukaryotic translation initiation factor 3 (eIF-3) complex.

The protein localises to the cytoplasm. Component of the eukaryotic translation initiation factor 3 (eIF-3) complex, which is involved in protein synthesis of a specialized repertoire of mRNAs and, together with other initiation factors, stimulates binding of mRNA and methionyl-tRNAi to the 40S ribosome. The eIF-3 complex specifically targets and initiates translation of a subset of mRNAs involved in cell proliferation. The sequence is that of Eukaryotic translation initiation factor 3 subunit J from Candida glabrata (strain ATCC 2001 / BCRC 20586 / JCM 3761 / NBRC 0622 / NRRL Y-65 / CBS 138) (Yeast).